Here is a 173-residue protein sequence, read N- to C-terminus: Crossover junction endodeoxyribonuclease RuvC (173 aa).

Active-site residues include Asp-8, Glu-67, and Asp-139. 3 residues coordinate Mg(2+): Asp-8, Glu-67, and Asp-139.

It belongs to the RuvC family. Homodimer which binds Holliday junction (HJ) DNA. The HJ becomes 2-fold symmetrical on binding to RuvC with unstacked arms; it has a different conformation from HJ DNA in complex with RuvA. In the full resolvosome a probable DNA-RuvA(4)-RuvB(12)-RuvC(2) complex forms which resolves the HJ. Mg(2+) is required as a cofactor.

Its subcellular location is the cytoplasm. It carries out the reaction Endonucleolytic cleavage at a junction such as a reciprocal single-stranded crossover between two homologous DNA duplexes (Holliday junction).. Functionally, the RuvA-RuvB-RuvC complex processes Holliday junction (HJ) DNA during genetic recombination and DNA repair. Endonuclease that resolves HJ intermediates. Cleaves cruciform DNA by making single-stranded nicks across the HJ at symmetrical positions within the homologous arms, yielding a 5'-phosphate and a 3'-hydroxyl group; requires a central core of homology in the junction. The consensus cleavage sequence is 5'-(A/T)TT(C/G)-3'. Cleavage occurs on the 3'-side of the TT dinucleotide at the point of strand exchange. HJ branch migration catalyzed by RuvA-RuvB allows RuvC to scan DNA until it finds its consensus sequence, where it cleaves and resolves the cruciform DNA. The sequence is that of Crossover junction endodeoxyribonuclease RuvC from Salmonella paratyphi C (strain RKS4594).